We begin with the raw amino-acid sequence, 391 residues long: 3-ketoacyl-CoA thiolase (391 aa).

The active-site Acyl-thioester intermediate is cysteine 95. Catalysis depends on proton acceptor residues histidine 347 and cysteine 377.

The protein belongs to the thiolase-like superfamily. Thiolase family. Heterotetramer of two alpha chains (FadB) and two beta chains (FadA).

It localises to the cytoplasm. The catalysed reaction is an acyl-CoA + acetyl-CoA = a 3-oxoacyl-CoA + CoA. It participates in lipid metabolism; fatty acid beta-oxidation. Catalyzes the final step of fatty acid oxidation in which acetyl-CoA is released and the CoA ester of a fatty acid two carbons shorter is formed. This Pseudomonas syringae pv. syringae (strain B728a) protein is 3-ketoacyl-CoA thiolase.